Here is an 80-residue protein sequence, read N- to C-terminus: UPF0154 protein SaurJH1_1431 (80 aa).

The chain crosses the membrane as a helical span at residues 4–24 (WLAIIFIVAALILGLIGGFLL).

Belongs to the UPF0154 family.

The protein resides in the cell membrane. The chain is UPF0154 protein SaurJH1_1431 from Staphylococcus aureus (strain JH1).